The sequence spans 294 residues: Transmembrane protein 178B (294 aa).

The first 23 residues, 1–23, serve as a signal peptide directing secretion; it reads MAAGRLLLYTGLSLALCALGMLA. Asn-148 and Asn-152 each carry an N-linked (GlcNAc...) asparagine glycan. 3 helical membrane passes run 172–192, 206–226, and 252–272; these read AGFM…GVLG, LLFL…VAGI, and MFCA…CTLA.

It belongs to the TMEM178 family.

It localises to the membrane. The sequence is that of Transmembrane protein 178B (TMEM178B) from Homo sapiens (Human).